Consider the following 106-residue polypeptide: Large ribosomal subunit protein eL42Q (106 aa).

Belongs to the eukaryotic ribosomal protein eL42 family.

This is Large ribosomal subunit protein eL42Q (RIM-C) from Candida maltosa (Yeast).